Reading from the N-terminus, the 407-residue chain is Probable tRNA sulfurtransferase (407 aa).

The region spanning 61–165 is the THUMP domain; the sequence is NEIIQRLSKV…MDAIYIYEKV (105 aa). ATP is bound by residues 183–184, 208–209, arginine 265, glycine 287, and glutamine 296; these read ML and HF.

The protein belongs to the ThiI family.

The protein resides in the cytoplasm. The enzyme catalyses [ThiI sulfur-carrier protein]-S-sulfanyl-L-cysteine + a uridine in tRNA + 2 reduced [2Fe-2S]-[ferredoxin] + ATP + H(+) = [ThiI sulfur-carrier protein]-L-cysteine + a 4-thiouridine in tRNA + 2 oxidized [2Fe-2S]-[ferredoxin] + AMP + diphosphate. It carries out the reaction [ThiS sulfur-carrier protein]-C-terminal Gly-Gly-AMP + S-sulfanyl-L-cysteinyl-[cysteine desulfurase] + AH2 = [ThiS sulfur-carrier protein]-C-terminal-Gly-aminoethanethioate + L-cysteinyl-[cysteine desulfurase] + A + AMP + 2 H(+). It participates in cofactor biosynthesis; thiamine diphosphate biosynthesis. Catalyzes the ATP-dependent transfer of a sulfur to tRNA to produce 4-thiouridine in position 8 of tRNAs, which functions as a near-UV photosensor. Also catalyzes the transfer of sulfur to the sulfur carrier protein ThiS, forming ThiS-thiocarboxylate. This is a step in the synthesis of thiazole, in the thiamine biosynthesis pathway. The sulfur is donated as persulfide by IscS. The polypeptide is Probable tRNA sulfurtransferase (Staphylococcus epidermidis (strain ATCC 35984 / DSM 28319 / BCRC 17069 / CCUG 31568 / BM 3577 / RP62A)).